A 767-amino-acid polypeptide reads, in one-letter code: Photosystem I P700 chlorophyll a apoprotein A1 (767 aa).

The tract at residues 1–22 (MTISPPESGEKNKKVLEDPVKA) is disordered. Residues 8–22 (SGEKNKKVLEDPVKA) are compositionally biased toward basic and acidic residues. The next 8 helical transmembrane spans lie at 76–99 (IFSA…FHGA), 162–185 (LMAL…FHYH), 201–225 (LNHH…HIGA), 309–327 (VSHH…GHMY), 368–391 (RHAQ…HHMY), 407–433 (LGLF…IAMV), 455–477 (ALIS…LYIH), and 558–576 (LMIH…LILL). Positions 600 and 609 each coordinate [4Fe-4S] cluster. Helical transmembrane passes span 616-637 (HVFL…HFSW) and 681-703 (ISMY…MFLF). Divinylchlorophyll a' is bound at residue histidine 692. Divinyl chlorophyll a-binding residues include methionine 700 and tyrosine 708. Position 709 (tryptophan 709) interacts with phylloquinone. A helical membrane pass occupies residues 741-761 (AVGVTHFLVGGIATTWAFFHA).

This sequence belongs to the PsaA/PsaB family. In terms of assembly, the PsaA/B heterodimer binds the P700 divinyl chlorophyll special pair and subsequent electron acceptors. PSI consists of a core antenna complex that captures photons, and an electron transfer chain that converts photonic excitation into a charge separation. The cyanobacterial PSI reaction center is composed of one copy each of PsaA,B,C,D,E,F,I,J,K,L,M and X, and forms trimeric complexes. PSI electron transfer chain: 5 divinyl chlorophyll a, 1 divinyl chlorophyll a', 2 phylloquinones and 3 4Fe-4S clusters. PSI core antenna: 90 divinyl chlorophyll a, 22 carotenoids, 3 phospholipids and 1 galactolipid. P700 is a divinyl chlorophyll a/divinyl chlorophyll a' dimer, A0 is one or more divinyl chlorophyll a, A1 is one or both phylloquinones and FX is a shared 4Fe-4S iron-sulfur center. serves as cofactor.

It is found in the cellular thylakoid membrane. It carries out the reaction reduced [plastocyanin] + hnu + oxidized [2Fe-2S]-[ferredoxin] = oxidized [plastocyanin] + reduced [2Fe-2S]-[ferredoxin]. PsaA and PsaB bind P700, the primary electron donor of photosystem I (PSI), as well as the electron acceptors A0, A1 and FX. PSI is a plastocyanin/cytochrome c6-ferredoxin oxidoreductase, converting photonic excitation into a charge separation, which transfers an electron from the donor P700 chlorophyll pair to the spectroscopically characterized acceptors A0, A1, FX, FA and FB in turn. Oxidized P700 is reduced on the lumenal side of the thylakoid membrane by plastocyanin or cytochrome c6. This is Photosystem I P700 chlorophyll a apoprotein A1 from Prochlorococcus marinus (strain MIT 9301).